We begin with the raw amino-acid sequence, 235 residues long: Transmembrane emp24 domain-containing protein 9 (235 aa).

An N-terminal signal peptide occupies residues 1–37 (MAAERSLWVVGLCPGSRLGRVVRVLLLLLWFAARGGA). Topologically, residues 38–201 (LYFHIGETEK…FRQTSESTNQ (164 aa)) are lumenal. Positions 47–145 (KKCFIEEIPD…MLRVHLDIQV (99 aa)) constitute a GOLD domain. The tract at residues 121–160 (CLHSNSTKFSLFAGGMLRVHLDIQVGEHANDYAEIAAKDK) is required for interaction with STX17. N-linked (GlcNAc...) asparagine glycosylation is present at Asn-125. Positions 154–184 (EIAAKDKLSELQLRVRQLVEQVEQIQKEQNY) form a coiled coil. The residue at position 160 (Lys-160) is an N6-acetyllysine. The helical transmembrane segment at 202-222 (RVLWWSILQTLILVAIGVWQM) threads the bilayer. Residues 223–235 (RHLKSFFEAKKLV) lie on the Cytoplasmic side of the membrane. A COPII vesicle coat-binding motif is present at residues 228–229 (FF). The short motif at 228 to 235 (FFEAKKLV) is the COPI vesicle coat-binding element.

This sequence belongs to the EMP24/GP25L family. In terms of assembly, monomer and homodimer in endoplasmic reticulum. Predominantly monomeric and to lesser extent homodimeric in endoplasmic reticulum-Golgi intermediate compartment and cis-Golgi network. Probably oligomerizes with other members of the EMP24/GP25L family such as TMED2, TMED7 and TMED10. Interacts with TMED5. Interacts (via C-terminus) with COPG1; the interaction involves dimeric TMED9. Interacts with PTPN2 and SPAST. Interacts with STX17; the interaction is direct. In terms of processing, N-linked glycosylated containing high mannose.

Its subcellular location is the endoplasmic reticulum membrane. The protein resides in the golgi apparatus. It localises to the cis-Golgi network membrane. It is found in the endoplasmic reticulum-Golgi intermediate compartment membrane. The protein localises to the trans-Golgi network membrane. Functionally, appears to be involved in vesicular protein trafficking, mainly in the early secretory pathway. In COPI vesicle-mediated retrograde transport involved in the coatomer recruitment to membranes of the early secretory pathway. Increases coatomer-dependent activity of ARFGAP2. Thought to play a crucial role in the specific retention of p24 complexes in cis-Golgi membranes; specifically contributes to the coupled localization of TMED2 and TMED10 in the cis-Golgi network. May be involved in organization of intracellular membranes, such as of the ER-Golgi intermediate compartment and the Golgi apparatus. Involved in ER localization of PTPN2. In Bos taurus (Bovine), this protein is Transmembrane emp24 domain-containing protein 9 (TMED9).